An 879-amino-acid polypeptide reads, in one-letter code: Phosphoenolpyruvate carboxylase (879 aa).

Catalysis depends on residues His138 and Lys545.

The protein belongs to the PEPCase type 1 family. It depends on Mg(2+) as a cofactor.

The catalysed reaction is oxaloacetate + phosphate = phosphoenolpyruvate + hydrogencarbonate. Its function is as follows. Forms oxaloacetate, a four-carbon dicarboxylic acid source for the tricarboxylic acid cycle. The chain is Phosphoenolpyruvate carboxylase from Actinobacillus pleuropneumoniae serotype 5b (strain L20).